The sequence spans 243 residues: Leucyl/phenylalanyl-tRNA--protein transferase (243 aa).

Belongs to the L/F-transferase family.

It is found in the cytoplasm. It carries out the reaction N-terminal L-lysyl-[protein] + L-leucyl-tRNA(Leu) = N-terminal L-leucyl-L-lysyl-[protein] + tRNA(Leu) + H(+). It catalyses the reaction N-terminal L-arginyl-[protein] + L-leucyl-tRNA(Leu) = N-terminal L-leucyl-L-arginyl-[protein] + tRNA(Leu) + H(+). The enzyme catalyses L-phenylalanyl-tRNA(Phe) + an N-terminal L-alpha-aminoacyl-[protein] = an N-terminal L-phenylalanyl-L-alpha-aminoacyl-[protein] + tRNA(Phe). Functionally, functions in the N-end rule pathway of protein degradation where it conjugates Leu, Phe and, less efficiently, Met from aminoacyl-tRNAs to the N-termini of proteins containing an N-terminal arginine or lysine. In Vibrio cholerae serotype O1 (strain ATCC 39315 / El Tor Inaba N16961), this protein is Leucyl/phenylalanyl-tRNA--protein transferase.